The sequence spans 263 residues: H-2 class II histocompatibility antigen, A-K beta chain (263 aa).

The signal sequence occupies residues M1–G27. The interval G28–L120 is beta-1. Residues G28 to K224 are Extracellular-facing. Disulfide bonds link C42-C104 and C143-C199. N46 carries N-linked (GlcNAc...) asparagine glycosylation. The tract at residues E121–W214 is beta-2. In terms of domain architecture, Ig-like C1-type spans P123–T211. Residues R215–K224 form a connecting peptide region. A helical transmembrane segment spans residues M225–I245. Residues R246–Q263 are Cytoplasmic-facing.

Belongs to the MHC class II family. Post-translationally, ubiquitinated in immature dendritic cells leading to down-regulation of MHC class II.

It is found in the membrane. The protein is H-2 class II histocompatibility antigen, A-K beta chain (H2-Ab1) of Mus musculus (Mouse).